Reading from the N-terminus, the 505-residue chain is ATP synthase subunit alpha (505 aa).

Residue 169–176 (GDRQTGKT) participates in ATP binding.

The protein belongs to the ATPase alpha/beta chains family. As to quaternary structure, F-type ATPases have 2 components, CF(1) - the catalytic core - and CF(0) - the membrane proton channel. CF(1) has five subunits: alpha(3), beta(3), gamma(1), delta(1), epsilon(1). CF(0) has three main subunits: a(1), b(2) and c(9-12). The alpha and beta chains form an alternating ring which encloses part of the gamma chain. CF(1) is attached to CF(0) by a central stalk formed by the gamma and epsilon chains, while a peripheral stalk is formed by the delta and b chains.

Its subcellular location is the cell membrane. The catalysed reaction is ATP + H2O + 4 H(+)(in) = ADP + phosphate + 5 H(+)(out). Its function is as follows. Produces ATP from ADP in the presence of a proton gradient across the membrane. The alpha chain is a regulatory subunit. The protein is ATP synthase subunit alpha of Alkaliphilus oremlandii (strain OhILAs) (Clostridium oremlandii (strain OhILAs)).